We begin with the raw amino-acid sequence, 58 residues long: Large ribosomal subunit protein bL33 (58 aa).

Belongs to the bacterial ribosomal protein bL33 family.

The polypeptide is Large ribosomal subunit protein bL33 (Brachyspira hyodysenteriae (strain ATCC 49526 / WA1)).